Reading from the N-terminus, the 684-residue chain is Suppressor of presenilin protein 3 (684 aa).

5 C2H2-type zinc fingers span residues 21-43 (YKCH…LRRH), 48-71 (FDCE…LQSH), 123-145 (YKCP…ILSH), 261-283 (YLCR…FRHH), and 291-313 (WTCI…VKMH). Disordered stretches follow at residues 337 to 359 (DLNK…HSDM), 419 to 440 (KNNS…SKSD), and 469 to 501 (TSKF…DQFQ). C2H2-type zinc fingers lie at residues 590–612 (RECT…RDKH) and 618–641 (HTCP…FVDH). Residues 652-684 (LPSSDSEDDNIPVPPDTPQRKKKAPKRGKRRGW) form a disordered region. Positions 671–684 (RKKKAPKRGKRRGW) are enriched in basic residues.

It is found in the nucleus. Its function is as follows. Probable transcriptional regulator, which participates in the transcriptional repression of the presenilin protein hop-1. This is Suppressor of presenilin protein 3 (spr-3) from Caenorhabditis elegans.